A 143-amino-acid chain; its full sequence is Large ribosomal subunit protein uL15 (143 aa).

The segment at 20–52 is disordered; the sequence is GRGIGSGKGKTAGRGHKGQHSRAGGYHKVGFEG. Residues 30–39 are compositionally biased toward basic residues; sequence TAGRGHKGQH.

Belongs to the universal ribosomal protein uL15 family. Part of the 50S ribosomal subunit.

Functionally, binds to the 23S rRNA. The polypeptide is Large ribosomal subunit protein uL15 (Coxiella burnetii (strain CbuG_Q212) (Coxiella burnetii (strain Q212))).